Here is a 222-residue protein sequence, read N- to C-terminus: Coiled-coil domain-containing protein 70 (222 aa).

Coiled coils occupy residues 34–62 (LQEEKAFREEMRHFREKIEDFREEMWNFR) and 129–188 (NALW…KAAW).

In Bos taurus (Bovine), this protein is Coiled-coil domain-containing protein 70 (CCDC70).